Reading from the N-terminus, the 270-residue chain is Putative pyruvate, phosphate dikinase regulatory protein (270 aa).

148 to 155 (GISRTSKT) is a binding site for ADP.

The protein belongs to the pyruvate, phosphate/water dikinase regulatory protein family. PDRP subfamily.

The catalysed reaction is N(tele)-phospho-L-histidyl/L-threonyl-[pyruvate, phosphate dikinase] + ADP = N(tele)-phospho-L-histidyl/O-phospho-L-threonyl-[pyruvate, phosphate dikinase] + AMP + H(+). It catalyses the reaction N(tele)-phospho-L-histidyl/O-phospho-L-threonyl-[pyruvate, phosphate dikinase] + phosphate + H(+) = N(tele)-phospho-L-histidyl/L-threonyl-[pyruvate, phosphate dikinase] + diphosphate. In terms of biological role, bifunctional serine/threonine kinase and phosphorylase involved in the regulation of the pyruvate, phosphate dikinase (PPDK) by catalyzing its phosphorylation/dephosphorylation. The sequence is that of Putative pyruvate, phosphate dikinase regulatory protein from Bacillus cereus (strain AH187).